The sequence spans 1441 residues: Tripeptidyl-peptidase 2 (1441 aa).

The tract at residues 62 to 89 is disordered; sequence AESSERSNSSKKTTNKEQSDKSAESRMA. The segment covering 75–85 has biased composition (basic and acidic residues); it reads TNKEQSDKSAE. A Peptidase S8 domain is found at 107 to 608; the sequence is ETGVLNFLQK…HGLLNVEKAF (502 aa). Residues Asp-131, His-359, and Ser-549 each act as charge relay system in the active site. Residues 1139-1155 are compositionally biased toward low complexity; sequence TANGAKPKAPATPQAAT. Disordered stretches follow at residues 1139–1190 and 1255–1274; these read TANG…KANA and QKTS…EDQK. Ser-1182 is subject to Phosphoserine. Residues 1265–1274 show a composition bias toward basic and acidic residues; the sequence is SADKQKEDQK.

The protein belongs to the peptidase S8 family. As to quaternary structure, homooligomer; forms a complex of 6 MDa probably composed of 40 subunits. Forms a structure consisting of 2 segmented and twisted strands that form a spindle-shaped structure. Each strand is composed of 10 segments (a segment being a homodimer oriented head to head), stacking of these segments leads to the formation of a twisted single strand. 2 strands compose the fully assembled spindle.

The protein resides in the cytoplasm. It catalyses the reaction Release of an N-terminal tripeptide from a polypeptide.. Inhibited by phenylmethanesulfonyl fluoride (PMSF) and butabindide, but not by peptidase inhibitor pepstatin, EDTA, nor bestatin. Its function is as follows. Component of the proteolytic cascade acting downstream of the 26S proteasome in the ubiquitin-proteasome pathway. Efficiently cleaves Ala-Ala-Ala-polypeptide and Pro-Pro-Ala-polypeptide, Val-Leu-Lys-polypeptide only at high concentration. Does not cleave Ala-Phe-Pro-polypeptide nor Pro-Leu-Gly-polypeptide. The protein is Tripeptidyl-peptidase 2 (TppII) of Drosophila melanogaster (Fruit fly).